Consider the following 481-residue polypeptide: Glutamyl-tRNA(Gln) amidotransferase subunit A (481 aa).

Active-site charge relay system residues include lysine 74 and serine 149. Serine 173 serves as the catalytic Acyl-ester intermediate.

The protein belongs to the amidase family. GatA subfamily. Heterotrimer of A, B and C subunits.

The catalysed reaction is L-glutamyl-tRNA(Gln) + L-glutamine + ATP + H2O = L-glutaminyl-tRNA(Gln) + L-glutamate + ADP + phosphate + H(+). In terms of biological role, allows the formation of correctly charged Gln-tRNA(Gln) through the transamidation of misacylated Glu-tRNA(Gln) in organisms which lack glutaminyl-tRNA synthetase. The reaction takes place in the presence of glutamine and ATP through an activated gamma-phospho-Glu-tRNA(Gln). The chain is Glutamyl-tRNA(Gln) amidotransferase subunit A from Francisella tularensis subsp. novicida (strain U112).